Consider the following 497-residue polypeptide: Probable cytosol aminopeptidase (497 aa).

2 residues coordinate Mn(2+): K263 and D268. K275 is an active-site residue. Mn(2+) contacts are provided by D286, D345, and E347. R349 is an active-site residue.

It belongs to the peptidase M17 family. Mn(2+) is required as a cofactor.

The protein localises to the cytoplasm. It catalyses the reaction Release of an N-terminal amino acid, Xaa-|-Yaa-, in which Xaa is preferably Leu, but may be other amino acids including Pro although not Arg or Lys, and Yaa may be Pro. Amino acid amides and methyl esters are also readily hydrolyzed, but rates on arylamides are exceedingly low.. The catalysed reaction is Release of an N-terminal amino acid, preferentially leucine, but not glutamic or aspartic acids.. Its function is as follows. Presumably involved in the processing and regular turnover of intracellular proteins. Catalyzes the removal of unsubstituted N-terminal amino acids from various peptides. This Methylorubrum extorquens (strain CM4 / NCIMB 13688) (Methylobacterium extorquens) protein is Probable cytosol aminopeptidase.